Reading from the N-terminus, the 907-residue chain is Translation initiation factor IF-2 (907 aa).

The tract at residues 26 to 317 (DAGMKKSSSD…KPKSMQHGFD (292 aa)) is disordered. Basic and acidic residues-rich tracts occupy residues 28–44 (GMKK…EKQK) and 101–248 (SAIE…DTDY). Over residues 299–308 (KGGRKGKLSK) the composition is skewed to basic residues. In terms of domain architecture, tr-type G spans 406 to 575 (PRAPVVTIMG…LLQAEVLELT (170 aa)). Residues 415 to 422 (GHVDHGKT) form a G1 region. 415–422 (GHVDHGKT) contacts GTP. A G2 region spans residues 440 to 444 (GITQH). Residues 461 to 464 (DTPG) are G3. GTP-binding positions include 461 to 465 (DTPGH) and 515 to 518 (NKID). The interval 515 to 518 (NKID) is G4. A G5 region spans residues 551–553 (SAK).

The protein belongs to the TRAFAC class translation factor GTPase superfamily. Classic translation factor GTPase family. IF-2 subfamily.

It localises to the cytoplasm. One of the essential components for the initiation of protein synthesis. Protects formylmethionyl-tRNA from spontaneous hydrolysis and promotes its binding to the 30S ribosomal subunits. Also involved in the hydrolysis of GTP during the formation of the 70S ribosomal complex. The chain is Translation initiation factor IF-2 from Vibrio vulnificus (strain YJ016).